The chain runs to 273 residues: Structural protein ORF273 (273 aa).

The protein resides in the virion. This chain is Structural protein ORF273, found in Acidianus convivator (ATV).